A 248-amino-acid polypeptide reads, in one-letter code: ATP synthase delta chain, chloroplastic (248 aa).

The transit peptide at Met-1–Lys-60 directs the protein to the chloroplast.

The protein belongs to the ATPase delta chain family. F-type ATPases have 2 components, CF(1) - the catalytic core - and CF(0) - the membrane proton channel. CF(1) has five subunits: alpha(3), beta(3), gamma(1), delta(1), epsilon(1). CF(0) has three main subunits: a, b and c.

The protein resides in the plastid. It is found in the chloroplast thylakoid membrane. This protein seems to be part of the stalk that links CF(0) to CF(1). It either transmits conformational changes from CF(0) into CF(1) or is implicated in proton conduction. The polypeptide is ATP synthase delta chain, chloroplastic (ATPD) (Nicotiana tabacum (Common tobacco)).